Here is a 756-residue protein sequence, read N- to C-terminus: NADP-dependent malic enzyme (756 aa).

The segment at 1–428 (MTEQLRQAAL…KLTQFVYKTS (428 aa)) is malic enzyme. The active-site Proton donor is Y39. The Proton acceptor role is filled by K94. Residues E136, D137, and D162 each coordinate a divalent metal cation. Residues 195–198 (AGAA), N288, and N320 contribute to the NADP(+) site. The segment at 429 to 756 (LFMRPIFSQA…AYAAVKAQQE (328 aa)) is phosphate acetyltransferase.

This sequence in the N-terminal section; belongs to the malic enzymes family. It in the C-terminal section; belongs to the phosphate acetyltransferase and butyryltransferase family. Requires Mg(2+) as cofactor. The cofactor is Mn(2+).

It carries out the reaction (S)-malate + NADP(+) = pyruvate + CO2 + NADPH. It catalyses the reaction oxaloacetate + H(+) = pyruvate + CO2. This chain is NADP-dependent malic enzyme (maeB), found in Haemophilus influenzae (strain ATCC 51907 / DSM 11121 / KW20 / Rd).